The following is a 322-amino-acid chain: MGERFKDPAKNFVCSFLNCKASFSKAWKLEAHYCKHTGLRPFACDRCDKTFCTRCQLTRHNLSHSGKKPYQCLEDGCSESFISTAGLKNHVERVHQHKEKHYVCDYEGCAKEFRKKKQLRSHKCEHMNQLPFECQYEGCGKKYTTSKKLQKHEKVHDVYPCAEEGCDFQGRMWTEYQAHRKAAHREALQCDSCAKVFHKAWFLKKHKLFVHLGVRRVFKCTKEGCQKTYTTHFNLQNHILSFHEGIRSFICPHDGCGKAFAMEGSLKRHAVVHDPQKKKLQKKTKRGRKKKLEPKTNVSDDSELPAQLHGLSLNTSTSQNNP.

9 C2H2-type zinc fingers span residues 12–36 (FVCS…YCKH), 42–64 (FACD…NLSH), 70–95 (YQCL…ERVH), 102–126 (YVCD…KCEH), 132–156 (FECQ…EKVH), 159–184 (YPCA…KAAH), 188–211 (LQCD…LFVH), 218–243 (FKCT…LSFH), and 249–273 (FICP…AVVH). The tract at residues 272-322 (VHDPQKKKLQKKTKRGRKKKLEPKTNVSDDSELPAQLHGLSLNTSTSQNNP) is disordered. Positions 278–292 (KKLQKKTKRGRKKKL) are enriched in basic residues. A compositionally biased stretch (polar residues) spans 312–322 (SLNTSTSQNNP).

It is found in the nucleus. Functionally, involved in ribosomal large subunit biogenesis. Interacts with the internal control region (ICR) of approximately 50 bases within the 5S RNA genes, is required for correct transcription of these genes by RNA polymerase III. Also binds the transcribed 5S RNA's. This chain is Transcription factor IIIA (gtf3a), found in Ictalurus punctatus (Channel catfish).